The chain runs to 403 residues: NADH-quinone oxidoreductase subunit D (403 aa).

The protein belongs to the complex I 49 kDa subunit family. In terms of assembly, NDH-1 is composed of 14 different subunits. Subunits NuoB, C, D, E, F, and G constitute the peripheral sector of the complex.

Its subcellular location is the cell inner membrane. It catalyses the reaction a quinone + NADH + 5 H(+)(in) = a quinol + NAD(+) + 4 H(+)(out). NDH-1 shuttles electrons from NADH, via FMN and iron-sulfur (Fe-S) centers, to quinones in the respiratory chain. The immediate electron acceptor for the enzyme in this species is believed to be ubiquinone. Couples the redox reaction to proton translocation (for every two electrons transferred, four hydrogen ions are translocated across the cytoplasmic membrane), and thus conserves the redox energy in a proton gradient. The protein is NADH-quinone oxidoreductase subunit D of Pelobacter propionicus (strain DSM 2379 / NBRC 103807 / OttBd1).